Here is a 284-residue protein sequence, read N- to C-terminus: Diaminopimelate epimerase (284 aa).

Substrate contacts are provided by asparagine 20, glutamine 53, and asparagine 73. The active-site Proton donor is the cysteine 82. Substrate is bound by residues 83–84 (GN), asparagine 167, asparagine 200, and 218–219 (ER). Catalysis depends on cysteine 227, which acts as the Proton acceptor. 228–229 (GS) is a substrate binding site.

The protein belongs to the diaminopimelate epimerase family. As to quaternary structure, homodimer.

It is found in the cytoplasm. The enzyme catalyses (2S,6S)-2,6-diaminopimelate = meso-2,6-diaminopimelate. Its pathway is amino-acid biosynthesis; L-lysine biosynthesis via DAP pathway; DL-2,6-diaminopimelate from LL-2,6-diaminopimelate: step 1/1. Catalyzes the stereoinversion of LL-2,6-diaminopimelate (L,L-DAP) to meso-diaminopimelate (meso-DAP), a precursor of L-lysine and an essential component of the bacterial peptidoglycan. The sequence is that of Diaminopimelate epimerase from Xylella fastidiosa (strain 9a5c).